We begin with the raw amino-acid sequence, 832 residues long: FAST kinase domain-containing protein 1, mitochondrial (832 aa).

Residues valine 765–lysine 825 form the RAP domain.

This sequence belongs to the FAST kinase family.

It localises to the mitochondrion. May regulate the stability of some mitochondrial mRNA species. In Xenopus laevis (African clawed frog), this protein is FAST kinase domain-containing protein 1, mitochondrial (fastkd1).